The sequence spans 321 residues: Glucokinase (321 aa).

8–13 (GDVGGT) provides a ligand contact to ATP.

The protein belongs to the bacterial glucokinase family.

It localises to the cytoplasm. It carries out the reaction D-glucose + ATP = D-glucose 6-phosphate + ADP + H(+). In Klebsiella pneumoniae subsp. pneumoniae (strain ATCC 700721 / MGH 78578), this protein is Glucokinase.